The following is a 72-amino-acid chain: DNA-directed RNA polymerase subunit omega (72 aa).

The protein belongs to the RNA polymerase subunit omega family. As to quaternary structure, the RNAP catalytic core consists of 2 alpha, 1 beta, 1 beta' and 1 omega subunit. When a sigma factor is associated with the core the holoenzyme is formed, which can initiate transcription.

The enzyme catalyses RNA(n) + a ribonucleoside 5'-triphosphate = RNA(n+1) + diphosphate. Its function is as follows. Promotes RNA polymerase assembly. Latches the N- and C-terminal regions of the beta' subunit thereby facilitating its interaction with the beta and alpha subunits. This chain is DNA-directed RNA polymerase subunit omega, found in Francisella philomiragia subsp. philomiragia (strain ATCC 25017 / CCUG 19701 / FSC 153 / O#319-036).